Reading from the N-terminus, the 436-residue chain is Adenylosuccinate synthetase (436 aa).

GTP contacts are provided by residues 12–18 (GDEGKGK) and 40–42 (GHT). Asp-13 (proton acceptor) is an active-site residue. Mg(2+) contacts are provided by Asp-13 and Gly-40. IMP contacts are provided by residues 13 to 16 (DEGK), 38 to 41 (NAGH), Thr-128, Arg-142, Gln-223, Thr-238, and Arg-302. The Proton donor role is filled by His-41. Position 298–304 (298–304 (TTTGRRR)) interacts with substrate. GTP contacts are provided by residues Arg-304, 330–332 (KLD), and 412–414 (SLG).

The protein belongs to the adenylosuccinate synthetase family. Homodimer. Mg(2+) is required as a cofactor.

The protein localises to the cytoplasm. It catalyses the reaction IMP + L-aspartate + GTP = N(6)-(1,2-dicarboxyethyl)-AMP + GDP + phosphate + 2 H(+). It functions in the pathway purine metabolism; AMP biosynthesis via de novo pathway; AMP from IMP: step 1/2. Its function is as follows. Plays an important role in the de novo pathway of purine nucleotide biosynthesis. Catalyzes the first committed step in the biosynthesis of AMP from IMP. The protein is Adenylosuccinate synthetase of Prochlorococcus marinus (strain AS9601).